The primary structure comprises 292 residues: Elongation factor Ts (292 aa).

The segment at 80 to 83 (TDFV) is involved in Mg(2+) ion dislocation from EF-Tu.

The protein belongs to the EF-Ts family.

Its subcellular location is the cytoplasm. Its function is as follows. Associates with the EF-Tu.GDP complex and induces the exchange of GDP to GTP. It remains bound to the aminoacyl-tRNA.EF-Tu.GTP complex up to the GTP hydrolysis stage on the ribosome. This chain is Elongation factor Ts, found in Limosilactobacillus fermentum (strain NBRC 3956 / LMG 18251) (Lactobacillus fermentum).